Consider the following 497-residue polypeptide: Glycerol kinase (497 aa).

An ADP-binding site is contributed by T13. Residues T13, T14, and S15 each contribute to the ATP site. A sn-glycerol 3-phosphate-binding site is contributed by T13. R17 is a binding site for ADP. Sn-glycerol 3-phosphate-binding residues include R83, E84, and Y135. Glycerol contacts are provided by R83, E84, and Y135. Position 231 is a phosphohistidine; by HPr (H231). Residue D245 participates in sn-glycerol 3-phosphate binding. Glycerol contacts are provided by D245 and Q246. The ADP site is built by T267 and G310. Positions 267, 310, 314, and 411 each coordinate ATP. ADP contacts are provided by G411 and N415.

This sequence belongs to the FGGY kinase family. As to quaternary structure, homotetramer and homodimer (in equilibrium). Post-translationally, the phosphoenolpyruvate-dependent sugar phosphotransferase system (PTS), including enzyme I, and histidine-containing protein (HPr) are required for the phosphorylation, which leads to the activation of the enzyme.

It carries out the reaction glycerol + ATP = sn-glycerol 3-phosphate + ADP + H(+). The protein operates within polyol metabolism; glycerol degradation via glycerol kinase pathway; sn-glycerol 3-phosphate from glycerol: step 1/1. Its activity is regulated as follows. Activated by phosphorylation and inhibited by fructose 1,6-bisphosphate (FBP). In terms of biological role, key enzyme in the regulation of glycerol uptake and metabolism. Catalyzes the phosphorylation of glycerol to yield sn-glycerol 3-phosphate. This Halalkalibacterium halodurans (strain ATCC BAA-125 / DSM 18197 / FERM 7344 / JCM 9153 / C-125) (Bacillus halodurans) protein is Glycerol kinase.